The primary structure comprises 606 residues: Vacuolar calcium ion transporter (606 aa).

The tract at residues 1-110 is disordered; that stretch reads MSPPRRVSFP…NSLDPNPGLM (110 aa). Residues 1 to 137 are Cytoplasmic-facing; sequence MSPPRRVSFP…PTYWGSMKAA (137 aa). Over residues 18–30 the composition is skewed to low complexity; sequence PPLADSPLSSPKL. Over residues 36–56 the composition is skewed to polar residues; it reads QSSSTPIVSSNLPTDTTNSAS. Residues 138–158 form a helical membrane-spanning segment; it reads ITSTWLNVLLVFIPIGWALYL. The Vacuolar segment spans residues 159–170; that stretch reads AKHNGGKDSISD. The chain crosses the membrane as a helical span at residues 171–191; that stretch reads TAVFCCTFIAIIPLAGLLGFA. The Cytoplasmic segment spans residues 192–204; sequence TEEAALRLGQTLG. A helical transmembrane segment spans residues 205–225; the sequence is GLLNATLGNAVELIVAILALI. Residues 226–236 are Vacuolar-facing; that stretch reads KCELQVVQSSL. The helical transmembrane segment at 237 to 257 threads the bilayer; the sequence is VGSILSNILLVLGMCFFAGGV. At 258 to 272 the chain is on the cytoplasmic side; the sequence is RFAEQAIKSTAAQLN. Residues 273–293 form a helical membrane-spanning segment; sequence ASLLLIAVIAVLIPSAFHFSI. The Vacuolar portion of the chain corresponds to 294–313; the sequence is SSSTSNTDASELANGEGADL. A helical membrane pass occupies residues 314-334; it reads LSMSHAVSILLLILYLGYLLF. Over 335 to 437 the chain is Cytoplasmic; the sequence is QMWTHATYYV…EEEEETPQMN (103 aa). The disordered stretch occupies residues 376–434; it reads DEEESYSTATTVSDAAVPPSARAEGGEVPATHGPGTAAAETGNRVEHEDAEEEEEEETP. Residues 423–433 show a composition bias toward acidic residues; that stretch reads EDAEEEEEEET. The chain crosses the membrane as a helical span at residues 438 to 458; sequence VVCTIALMVIDTVLVGVTAEF. Residues 459–477 are Vacuolar-facing; that stretch reads LVDSINGMVESNPSLSAEW. A helical membrane pass occupies residues 478–498; it reads VGLILLPIVGNAAEHFTAVSV. Topologically, residues 499-505 are cytoplasmic; it reads SVKDKLD. The chain crosses the membrane as a helical span at residues 506–526; that stretch reads LSISVAVGSSIQIALFVIPVI. Topologically, residues 527–535 are vacuolar; sequence ELLAWTIGK. Residues 536–556 traverse the membrane as a helical segment; that stretch reads PMTLLFDPYESIVLFLSVLIV. The Cytoplasmic segment spans residues 557-566; sequence NQTLADGRSN. A helical transmembrane segment spans residues 567-587; that stretch reads WMEGMVLMMLYIIIAVSFWYY. The Vacuolar portion of the chain corresponds to 588-606; sequence PGSTTATLLGCQDSSSVTG.

This sequence belongs to the Ca(2+):cation antiporter (CaCA) (TC 2.A.19) family.

It is found in the vacuole membrane. Has a role in promoting intracellular calcium ion sequestration via the exchange of calcium ions for hydrogen ions across the vacuolar membrane. This chain is Vacuolar calcium ion transporter, found in Cryptococcus neoformans var. grubii serotype A (strain H99 / ATCC 208821 / CBS 10515 / FGSC 9487) (Filobasidiella neoformans var. grubii).